A 151-amino-acid polypeptide reads, in one-letter code: D-aminoacyl-tRNA deacylase (151 aa).

Positions Gly137–Pro138 match the Gly-cisPro motif, important for rejection of L-amino acids motif.

This sequence belongs to the DTD family. In terms of assembly, homodimer.

It localises to the cytoplasm. It catalyses the reaction glycyl-tRNA(Ala) + H2O = tRNA(Ala) + glycine + H(+). The catalysed reaction is a D-aminoacyl-tRNA + H2O = a tRNA + a D-alpha-amino acid + H(+). Its function is as follows. An aminoacyl-tRNA editing enzyme that deacylates mischarged D-aminoacyl-tRNAs. Also deacylates mischarged glycyl-tRNA(Ala), protecting cells against glycine mischarging by AlaRS. Acts via tRNA-based rather than protein-based catalysis; rejects L-amino acids rather than detecting D-amino acids in the active site. By recycling D-aminoacyl-tRNA to D-amino acids and free tRNA molecules, this enzyme counteracts the toxicity associated with the formation of D-aminoacyl-tRNA entities in vivo and helps enforce protein L-homochirality. This is D-aminoacyl-tRNA deacylase from Fusobacterium nucleatum subsp. nucleatum (strain ATCC 25586 / DSM 15643 / BCRC 10681 / CIP 101130 / JCM 8532 / KCTC 2640 / LMG 13131 / VPI 4355).